We begin with the raw amino-acid sequence, 282 residues long: MDNSRTRPRVGHIQFLNCLPLYWGLARTGTLLDFELTKDTPEKLSEQLVRGDLDIGPVTLVEFLKNADDLVAFPDIAVGCDGPVMSCVIVSQVPLDRLDGARVALGSTSRTSVRLAQLLLSERFGVQPDYYTCPPDLSLMMQEADAAVLIGDAALRANMIDGPRYGLDVHDLGALWKEWTGLPFVFAVWAARRDYAEREPVITRKVHEAFLASRNLSLEEVEKVAEQAARWEAFDEDTLAKYFTTLDFRFGAPQLEAVTEFARRVGPTTGFPADVKVELLKP.

This sequence belongs to the MqnA/MqnD family. MqnA subfamily.

The enzyme catalyses chorismate = 3-[(1-carboxyvinyl)-oxy]benzoate + H2O. It functions in the pathway quinol/quinone metabolism; menaquinone biosynthesis. Catalyzes the dehydration of chorismate into 3-[(1-carboxyvinyl)oxy]benzoate, a step in the biosynthesis of menaquinone (MK, vitamin K2). This chain is Chorismate dehydratase, found in Streptomyces coelicolor (strain ATCC BAA-471 / A3(2) / M145).